The sequence spans 64 residues: Conotoxin VnMRCL-04 (64 aa).

The signal sequence occupies residues M1–A22. Positions R23–R48 are excised as a propeptide. W63 carries the tryptophan amide modification.

It belongs to the conotoxin T superfamily. Post-translationally, contains 2 disulfide bonds that can be either 'C1-C3, C2-C4' or 'C1-C4, C2-C3', since these disulfide connectivities have been observed for conotoxins with cysteine framework V (for examples, see AC P0DQQ7 and AC P81755). Expressed by the venom duct.

It localises to the secreted. This is Conotoxin VnMRCL-04 from Conus ventricosus (Mediterranean cone).